Consider the following 79-residue polypeptide: D-alanyl carrier protein (79 aa).

The 76-residue stretch at 1 to 76 (MEEQVLSLLE…RVMAYVKKRV (76 aa)) folds into the Carrier domain. An O-(pantetheine 4'-phosphoryl)serine modification is found at Ser-34.

This sequence belongs to the DltC family. In terms of processing, 4'-phosphopantetheine is transferred from CoA to a specific serine of apo-DCP.

It is found in the cytoplasm. It participates in cell wall biogenesis; lipoteichoic acid biosynthesis. Carrier protein involved in the D-alanylation of lipoteichoic acid (LTA). The loading of thioester-linked D-alanine onto DltC is catalyzed by D-alanine--D-alanyl carrier protein ligase DltA. The DltC-carried D-alanyl group is further transferred to cell membrane phosphatidylglycerol (PG) by forming an ester bond, probably catalyzed by DltD. D-alanylation of LTA plays an important role in modulating the properties of the cell wall in Gram-positive bacteria, influencing the net charge of the cell wall. This Abiotrophia defectiva (Streptococcus defectivus) protein is D-alanyl carrier protein.